We begin with the raw amino-acid sequence, 240 residues long: Lactate utilization protein C (240 aa).

The protein belongs to the LutC/YkgG family.

Functionally, is involved in L-lactate degradation and allows cells to grow with lactate as the sole carbon source. This Geobacillus thermodenitrificans (strain NG80-2) protein is Lactate utilization protein C.